Reading from the N-terminus, the 1084-residue chain is Ataxin-2 homolog (1084 aa).

The segment covering 1–10 (MNNNSKRKTR) has biased composition (basic residues). The tract at residues 1 to 46 (MNNNSKRKTRPTGGGASGGISRYNSNDNSLRPTNNKAGAGGGNGGA) is disordered. The span at 22–33 (RYNSNDNSLRPT) shows a compositional bias: polar residues. The Sm domain occupies 60-135 (FFMHSATALV…VVTIVAKDFD (76 aa)). Ser208, Ser211, Ser221, and Ser266 each carry phosphoserine. Disordered regions lie at residues 260-935 (AAVE…RSNY), 1000-1037 (TQTP…FTPP), and 1057-1084 (HYFP…HQPQ). The span at 265–300 (PSTEQDQRGDRGDRERNDRDREREERDRDRDRDRGN) shows a compositional bias: basic and acidic residues. The segment covering 312 to 331 (ETMSSDRYITKQTRSITGPQ) has biased composition (polar residues). Low complexity-rich tracts occupy residues 384-403 (GPAP…SGGS) and 424-445 (GGSN…NKGG). Polar residues-rich tracts occupy residues 452–476 (MPSQ…NQSH) and 484–513 (NGDS…SSLN). 8 stretches are compositionally biased toward low complexity: residues 540–584 (PPLQ…NTQP), 613–694 (SPPQ…QQQH), 701–711 (QKAQQQQLVET), 733–743 (LLQDPSQQPLP), 754–765 (SPVVVTSPVLLE), 773–788 (PVVQ…TPKP), 796–812 (SSNT…PTAG), and 822–853 (TTPA…TTPV). Residues 871-885 (PSTPNPSRPHTPQTP) are compositionally biased toward pro residues. The span at 886 to 896 (VPMTNIYTTTG) shows a compositional bias: polar residues. 2 stretches are compositionally biased toward low complexity: residues 1000–1017 (TQTP…HQQF) and 1066–1084 (HPQQ…HQPQ).

Belongs to the ataxin-2 family. Homodimer. In the circadian pacemaker neurons, core component of the Atx2-tyf activator complex composed of at least Atx2, tyf, pAbp, Lsm12a. In the circadian pacemaker neurons, also a core component of the Atx2-Not1 repressor complex composed of at least Atx2, tyf, pAbp, me31B. Interacts (via PAM2 motif) with pAbp. Interacts (via N-terminus) with tyf independently of pAbp. Forms a subcomplex composed of Atx2 and pAbP which can associate with the 5' cap of pre-mRNAs independently of tyf, Lsm12a or me31B. Interacts with Lsm12a and me31B.

It is found in the cytoplasm. Its function is as follows. RNA binding protein that regulates various processes including circadian behaviors, actin filament formation, eye development and oocyte formation. Forms a complex with tyf and pAbp which functions in adult circadian pacemaker neurons to sustain circadian rhythms likely by switching between activator and repressor modes of post-transcriptional regulation via interaction with Lsm12a or me31B. Forms an activator complex (Atx2-tyf activator complex) via association with Lsm12a and activates the TYF-dependent translation of per to maintain 24 hour periodicity in circadian locomotor behaviors. Forms a repressor complex (Atx2-Not1 repressor complex) via the me31B-dependent association with Not1 to promote Not1-dependent post-transcriptional gene silencing and support high-amplitude circadian rhythms in a per-independent manner. Regulates actin filament formation, though it does not directly assemble with actin filaments. Required for oocyte specification and oocyte positioning in the female germline. Also required for normal eye development and bristle morphology. The protein is Ataxin-2 homolog of Drosophila melanogaster (Fruit fly).